Consider the following 465-residue polypeptide: Cruciform DNA-recognizing protein 1 (465 aa).

Disordered stretches follow at residues 107-227 and 247-276; these read EAGG…VPNP and RLNKKEEVPEPVAGPIVESSVTEKSPALPQ. Residues 127-151 are compositionally biased toward basic residues; sequence NRKKNKRNNKKRRSKLKKKSTKNNK. Phosphoserine is present on residues Ser-153 and Ser-156. Residues 156 to 165 are compositionally biased toward acidic residues; sequence SLDDNEEEDG. Residues 160–161 are X-DNA-binding; it reads NE. A compositionally biased stretch (low complexity) spans 166 to 177; it reads VTGTTTEDVTGT. Thr-182 bears the Phosphothreonine mark. The residue at position 271 (Ser-271) is a Phosphoserine. Thr-295 carries the phosphothreonine modification. The interval 298-465 is disordered; it reads VEAVTPLINE…FFGKLKKLFK (168 aa). Ser-319 and Ser-343 each carry phosphoserine. The segment covering 337 to 363 has biased composition (basic and acidic residues); sequence LVEKRESTEGVLDGSKKVENKAKKDEE. Phosphothreonine is present on Thr-366. Basic and acidic residues-rich tracts occupy residues 385 to 398 and 404 to 428; these read AEGRKSPAVSEEKE and EKGSKEVKRSETSKEKKPSAKEVKK. Ser-394 carries the phosphoserine modification. Position 440 is a phosphoserine (Ser-440). The segment covering 451–465 has biased composition (basic residues); it reads KKKTGFFGKLKKLFK.

This sequence belongs to the CRP1/MDG1 family. Cleaved in the vicinity of position 160 to give an X-DNA-binding N-terminal subpeptide and a non-DNA-binding C-terminal subpeptide.

Its function is as follows. Cruciform DNA-binding protein which exerts an enhancing effect on the cleavage of cruciform DNA (X-DNA) by endonuclease VII from bacteriophage T4. This Saccharomyces cerevisiae (strain RM11-1a) (Baker's yeast) protein is Cruciform DNA-recognizing protein 1 (CRP1).